Consider the following 384-residue polypeptide: Anhydro-N-acetylmuramic acid kinase (384 aa).

Residue 9–16 (GTSVDGID) participates in ATP binding.

Belongs to the anhydro-N-acetylmuramic acid kinase family.

It carries out the reaction 1,6-anhydro-N-acetyl-beta-muramate + ATP + H2O = N-acetyl-D-muramate 6-phosphate + ADP + H(+). Its pathway is amino-sugar metabolism; 1,6-anhydro-N-acetylmuramate degradation. The protein operates within cell wall biogenesis; peptidoglycan recycling. Functionally, catalyzes the specific phosphorylation of 1,6-anhydro-N-acetylmuramic acid (anhMurNAc) with the simultaneous cleavage of the 1,6-anhydro ring, generating MurNAc-6-P. Is required for the utilization of anhMurNAc either imported from the medium or derived from its own cell wall murein, and thus plays a role in cell wall recycling. The sequence is that of Anhydro-N-acetylmuramic acid kinase from Rippkaea orientalis (strain PCC 8801 / RF-1) (Cyanothece sp. (strain PCC 8801)).